The following is a 251-amino-acid chain: 14-3-3-like protein (251 aa).

Belongs to the 14-3-3 family.

This chain is 14-3-3-like protein, found in Fucus vesiculosus (Bladder wrack).